Reading from the N-terminus, the 472-residue chain is Carboxypeptidase Q (472 aa).

The N-terminal stretch at 1–20 is a signal peptide; it reads MRFLFFLFVAVVHLFSLGSG. Positions 21 to 44 are excised as a propeptide; it reads KAIYKSGVSQRTFQEIKEEIANYE. Residue asparagine 61 is glycosylated (N-linked (GlcNAc...) asparagine). Residues histidine 290 and aspartate 302 each contribute to the Zn(2+) site. Residue glutamate 336 is the Nucleophile of the active site. Glutamate 337 provides a ligand contact to Zn(2+). Asparagine 353 carries N-linked (GlcNAc...) asparagine glycosylation. Aspartate 364 contributes to the Zn(2+) binding site. An N-linked (GlcNAc...) asparagine glycan is attached at asparagine 396. Position 434 (histidine 434) interacts with Zn(2+).

The protein belongs to the peptidase M28 family. As to quaternary structure, homodimer. The monomeric form is inactive while the homodimer is active. N-glycosylated. The secreted form is modified by hybrid or complex type oligosaccharide chains.

It localises to the endoplasmic reticulum. It is found in the golgi apparatus. The protein localises to the lysosome. The protein resides in the secreted. In terms of biological role, carboxypeptidase that may play an important role in the hydrolysis of circulating peptides. Catalyzes the hydrolysis of dipeptides with unsubstituted terminals into amino acids. May play a role in the liberation of thyroxine hormone from its thyroglobulin (Tg) precursor. The chain is Carboxypeptidase Q (Cpq) from Rattus norvegicus (Rat).